The chain runs to 363 residues: L-serine dehydratase/L-threonine deaminase (363 aa).

A2 is subject to N-acetylalanine. K41 bears the N6-(pyridoxal phosphate)lysine mark. The tract at residues 74–98 is disordered; sequence RGRSHSGDEQPHVRSQALLPDTPSP. A pyridoxal 5'-phosphate-binding site is contributed by P164.

The protein belongs to the serine/threonine dehydratase family. In terms of assembly, homodimer. Pyridoxal 5'-phosphate serves as cofactor. Predominantly expressed in the periportal regions of the liver.

The protein resides in the cytoplasm. It catalyses the reaction L-serine = pyruvate + NH4(+). The catalysed reaction is L-threonine = 2-oxobutanoate + NH4(+). The protein operates within carbohydrate biosynthesis; gluconeogenesis. Catalyzes the pyridoxal-phosphate-dependent dehydrative deamination of L-threonine and L-serine to ammonia and alpha-ketobutyrate and pyruvate, respectively. This Rattus norvegicus (Rat) protein is L-serine dehydratase/L-threonine deaminase (Sds).